We begin with the raw amino-acid sequence, 258 residues long: Imidazole glycerol phosphate synthase subunit HisF (258 aa).

Residues Asp-11 and Asp-130 contribute to the active site.

The protein belongs to the HisA/HisF family. Heterodimer of HisH and HisF.

It is found in the cytoplasm. The enzyme catalyses 5-[(5-phospho-1-deoxy-D-ribulos-1-ylimino)methylamino]-1-(5-phospho-beta-D-ribosyl)imidazole-4-carboxamide + L-glutamine = D-erythro-1-(imidazol-4-yl)glycerol 3-phosphate + 5-amino-1-(5-phospho-beta-D-ribosyl)imidazole-4-carboxamide + L-glutamate + H(+). It functions in the pathway amino-acid biosynthesis; L-histidine biosynthesis; L-histidine from 5-phospho-alpha-D-ribose 1-diphosphate: step 5/9. IGPS catalyzes the conversion of PRFAR and glutamine to IGP, AICAR and glutamate. The HisF subunit catalyzes the cyclization activity that produces IGP and AICAR from PRFAR using the ammonia provided by the HisH subunit. The polypeptide is Imidazole glycerol phosphate synthase subunit HisF (Roseiflexus sp. (strain RS-1)).